A 647-amino-acid polypeptide reads, in one-letter code: 2',3'-cyclic-nucleotide 2'-phosphodiesterase/3'-nucleotidase (647 aa).

The signal sequence occupies residues 1–19; sequence MIKFSATLLATLIAASVNA. A divalent metal cation-binding residues include Asp-31, His-33, Asp-76, Asn-116, His-225, His-257, and His-259. Substrate-binding positions include Tyr-440 and 544–550; that span reads YRAYGGK.

The protein belongs to the 5'-nucleotidase family. The cofactor is a divalent metal cation.

It localises to the periplasm. The catalysed reaction is a nucleoside 2',3'-cyclic phosphate + H2O = a nucleoside 3'-phosphate + H(+). It carries out the reaction a ribonucleoside 3'-phosphate + H2O = a ribonucleoside + phosphate. This bifunctional enzyme catalyzes two consecutive reactions during ribonucleic acid degradation. Converts a 2',3'-cyclic nucleotide to a 3'-nucleotide and then the 3'-nucleotide to the corresponding nucleoside and phosphate. The sequence is that of 2',3'-cyclic-nucleotide 2'-phosphodiesterase/3'-nucleotidase (cpdB) from Salmonella typhimurium (strain LT2 / SGSC1412 / ATCC 700720).